The following is a 209-amino-acid chain: Response regulator protein VraR (209 aa).

The 117-residue stretch at 4–120 (KVLFVDDHEM…DIADAVRKTY (117 aa)) folds into the Response regulatory domain. D55 is subject to 4-aspartylphosphate. One can recognise an HTH luxR-type domain in the interval 141–206 (RAELYEMLTE…QAVIYAFQHN (66 aa)). Residues 165-184 (NQEIASASHITIKTVKTHVS) constitute a DNA-binding region (H-T-H motif).

Phosphorylated by VraS.

The protein resides in the cytoplasm. Functionally, member of the two-component regulatory system VraS/VraR involved in the control of the cell wall peptidoglycan biosynthesis. This is Response regulator protein VraR (vraR) from Staphylococcus epidermidis (strain ATCC 35984 / DSM 28319 / BCRC 17069 / CCUG 31568 / BM 3577 / RP62A).